The sequence spans 977 residues: Macrophage colony-stimulating factor 1 receptor (977 aa).

The first 18 residues, 1–18, serve as a signal peptide directing secretion; sequence MFFALLFLIGILLGQVQG. Residues 19-519 lie on the Extracellular side of the membrane; it reads WSEPRIRLSS…MEVSDQIFTS (501 aa). Ig-like C2-type domains follow at residues 22–109, 120–198, 213–305, 316–407, and 408–513; these read PRIR…VHVF, PSTS…EKVS, PYVY…TQLL, PKLS…ASIT, and FDIK…MEVS. Cys48 and Cys92 are joined by a disulfide. Asn98, Asn101, Asn154, Asn163, Asn244, Asn286, Asn298, Asn361, Asn424, and Asn455 each carry an N-linked (GlcNAc...) asparagine glycan. 2 disulfide bridges follow: Cys138/Cys187 and Cys234/Cys289. Cys430 and Cys495 form a disulfide bridge. A helical transmembrane segment spans residues 520 to 540; it reads AMCGSTVAMVVLGLLLIFMIY. Topologically, residues 541 to 977 are cytoplasmic; it reads KYKQKPRYEI…LMKPNNYQFC (437 aa). The tract at residues 544-576 is regulatory juxtamembrane domain; that stretch reads QKPRYEIRWKIIEATNGNNYTFIDPTQLPYNEK. Tyr563 is subject to Phosphotyrosine; by autocatalysis. The Protein kinase domain maps to 584 to 917; the sequence is LKLGKTLGAG…KISQMIQRML (334 aa). ATP-binding positions include 590–598 and Lys618; that span reads LGAGAFGKV. 2 positions are modified to phosphotyrosine; by autocatalysis: Tyr701 and Tyr725. Asp781 (proton acceptor) is an active-site residue. The segment at 799-821 is activation loop; that stretch reads DFGLARDIMNDSNYVVKGNARLP. A phosphotyrosine; by autocatalysis mark is found at Tyr812 and Tyr929. The tract at residues 919–977 is disordered; it reads ETSEQQDTQEYKNIPTEAEAEQQLESCDPVKHEDESFETSCDQEEEDQPLMKPNNYQFC. The segment covering 953-966 has biased composition (acidic residues); it reads ESFETSCDQEEEDQ. The residue at position 974 (Tyr974) is a Phosphotyrosine; by autocatalysis.

It belongs to the protein kinase superfamily. Tyr protein kinase family. CSF-1/PDGF receptor subfamily. Monomer. Homodimer. Interacts with CSF1. Post-translationally, autophosphorylated in response to CSF1 binding. autophosphorylation, leading to its degradation. Ubiquitinated. Becomes rapidly polyubiquitinated after autophosphorylation, leading to its degradation.

It is found in the cell membrane. The catalysed reaction is L-tyrosyl-[protein] + ATP = O-phospho-L-tyrosyl-[protein] + ADP + H(+). Its activity is regulated as follows. Present in an inactive conformation in the absence of bound ligand. CSF1 binding leads to dimerization and activation by autophosphorylation on tyrosine residues. Its function is as follows. Tyrosine-protein kinase that acts as a cell-surface receptor for CSF1 and plays an essential role in the regulation of survival, proliferation and differentiation of hematopoietic precursor cells, especially mononuclear phagocytes, such as macrophages and monocytes. Plays an important role in innate immunity and in inflammatory processes. Plays an important role in the regulation of osteoclast proliferation and differentiation, the regulation of bone resorption, and is required for normal bone development. Promotes reorganization of the actin cytoskeleton, regulates formation of membrane ruffles, cell adhesion and cell migration. Activates several signaling pathways in response to ligand binding. This chain is Macrophage colony-stimulating factor 1 receptor (csf1r), found in Danio rerio (Zebrafish).